The primary structure comprises 593 residues: Cell surface glycoprotein (593 aa).

Positions Met1–Ala22 are cleaved as a signal peptide. N-linked (GalNAc...) asparagine glycans are attached at residues Asn29, Asn58, Asn66, Asn74, Asn114, Asn122, Asn145, Asn148, Asn158, Asn176, Asn208, Asn231, Asn326, Asn336, Asn340, Asn431, Asn471, Asn500, and Asn516.

Post-translationally, N-glycosylated; contains glycans composed of methyl-Man, Man and GalNAc residues in a molar ratio of 2:3:1.

The protein localises to the secreted. It is found in the cell wall. The protein resides in the S-layer. The S-layer is a paracrystalline mono-layered assembly of proteins which coat the surface of the cell. The chain is Cell surface glycoprotein (slgA) from Methanothermus fervidus (strain ATCC 43054 / DSM 2088 / JCM 10308 / V24 S).